A 453-amino-acid chain; its full sequence is uncharacterized protein (453 aa).

Disordered stretches follow at residues 15 to 42 (LKRK…SETM) and 425 to 453 (TNEI…RHAK). Residues 425–437 (TNEISSSNNSGTA) show a composition bias toward polar residues. Residues 443–453 (QNRKRNRRHAK) show a composition bias toward basic residues.

This is an uncharacterized protein from Caenorhabditis elegans.